A 489-amino-acid chain; its full sequence is MKFDDLRDFIGQLEERGLLKRIKQEIDPHLEMTEISDRTLRAGGPALLFENPKGFDTPVLTNLFGTTQRVALAMGQDDVAALKEVGKWLAYLKEPEPPKGIKSLWEKLPIFKQVLNMPTKKVRSPACQQVIMEGDDVDLTKLPIMTCWPGDVAPLITWGLTITKGPYKKRQNLGIYRQQLLGKNKIIMRWLSHRGGALDFREWQEVNPGKPFPVSVALGADPATILGAVTPIPDTLSEYAFAGLLRGSRTKVAKSISNDLDIPATAEIILEGYLQPGEEAPEGPYGDHTGYYNEVDDFQVMTVTHVTHRENPIYLSTYTGRPPDEPSILGVALNEIFVPILQKQFPEIVDFYLPPEGCSYRMAVVSIKKSYPGHAKRVMFGIWSFLRQFMYTKFIIVCDDDVNVRDWNDVIWAITTRMDPSRDTTLVDNTPIDYLDFASPVSGLGSKMGMDATNKWAGESDREWGTPILMDKKVKEKIDDLWQDLDILS.

Residue N172 coordinates Mn(2+). Prenylated FMN is bound by residues 175 to 177, 189 to 191, and 194 to 195; these read IYR, RWL, and RG. E238 contacts Mn(2+). Catalysis depends on D287, which acts as the Proton donor.

The protein belongs to the UbiD family. In terms of assembly, homohexamer. Requires prenylated FMN as cofactor. The cofactor is Mn(2+).

The protein resides in the cell membrane. The catalysed reaction is a 4-hydroxy-3-(all-trans-polyprenyl)benzoate + H(+) = a 2-(all-trans-polyprenyl)phenol + CO2. The protein operates within cofactor biosynthesis; ubiquinone biosynthesis. Functionally, catalyzes the decarboxylation of 3-octaprenyl-4-hydroxy benzoate to 2-octaprenylphenol, an intermediate step in ubiquinone biosynthesis. This is 3-octaprenyl-4-hydroxybenzoate carboxy-lyase from Psychromonas ingrahamii (strain DSM 17664 / CCUG 51855 / 37).